The chain runs to 162 residues: Peptidyl-prolyl cis-trans isomerase-like 1 (162 aa).

Positions 1–155 (MATDVTFDTS…DEVKILRAKV (155 aa)) constitute a PPIase cyclophilin-type domain.

It belongs to the cyclophilin-type PPIase family. PPIL1 subfamily.

The enzyme catalyses [protein]-peptidylproline (omega=180) = [protein]-peptidylproline (omega=0). Its function is as follows. PPIases accelerate the folding of proteins. It catalyzes the cis-trans isomerization of proline imidic peptide bonds in oligopeptides. In Emericella nidulans (strain FGSC A4 / ATCC 38163 / CBS 112.46 / NRRL 194 / M139) (Aspergillus nidulans), this protein is Peptidyl-prolyl cis-trans isomerase-like 1 (cyp1).